A 921-amino-acid polypeptide reads, in one-letter code: TRPM8 channel-associated factor 1 (921 aa).

The region spanning 542 to 841 (YCWMSTGLYI…TYLQLQEAFG (300 aa)) is the Peptidase M60 domain.

This sequence belongs to the TCAF family. As to quaternary structure, interacts with TRPM8 (via N-terminus and C-terminus domains); the interaction inhibits TRPM8 channel activity. Interacts with TRPV6.

It is found in the cell membrane. Functionally, positively regulates the plasma membrane cation channel TRPM8 activity. Involved in the recruitment of TRPM8 to the cell surface. Promotes prostate cancer cell migration inhibition in a TRPM8-dependent manner. The sequence is that of TRPM8 channel-associated factor 1 from Pongo abelii (Sumatran orangutan).